Here is a 349-residue protein sequence, read N- to C-terminus: Cobalt-precorrin-5B C(1)-methyltransferase (349 aa).

The protein belongs to the CbiD family.

It carries out the reaction Co-precorrin-5B + S-adenosyl-L-methionine = Co-precorrin-6A + S-adenosyl-L-homocysteine. It participates in cofactor biosynthesis; adenosylcobalamin biosynthesis; cob(II)yrinate a,c-diamide from sirohydrochlorin (anaerobic route): step 6/10. In terms of biological role, catalyzes the methylation of C-1 in cobalt-precorrin-5B to form cobalt-precorrin-6A. This chain is Cobalt-precorrin-5B C(1)-methyltransferase, found in Saccharolobus islandicus (strain Y.N.15.51 / Yellowstone #2) (Sulfolobus islandicus).